Here is a 233-residue protein sequence, read N- to C-terminus: Large ribosomal subunit protein uL1 (233 aa).

It belongs to the universal ribosomal protein uL1 family. In terms of assembly, part of the 50S ribosomal subunit.

In terms of biological role, binds directly to 23S rRNA. The L1 stalk is quite mobile in the ribosome, and is involved in E site tRNA release. Its function is as follows. Protein L1 is also a translational repressor protein, it controls the translation of the L11 operon by binding to its mRNA. The sequence is that of Large ribosomal subunit protein uL1 from Shewanella loihica (strain ATCC BAA-1088 / PV-4).